Consider the following 776-residue polypeptide: LPS-assembly protein LptD (776 aa).

An N-terminal signal peptide occupies residues 1 to 24; that stretch reads MQHFSRTFLAASIATALFAPYAQA.

Belongs to the LptD family. As to quaternary structure, component of the lipopolysaccharide transport and assembly complex. Interacts with LptE and LptA.

It localises to the cell outer membrane. In terms of biological role, together with LptE, is involved in the assembly of lipopolysaccharide (LPS) at the surface of the outer membrane. This chain is LPS-assembly protein LptD, found in Vibrio vulnificus (strain CMCP6).